Reading from the N-terminus, the 333-residue chain is Ornithine carbamoyltransferase (333 aa).

Residues 57–60 (STRT), glutamine 83, arginine 107, and 134–137 (HPTQ) contribute to the carbamoyl phosphate site. L-ornithine is bound by residues asparagine 168, aspartate 232, and 236 to 237 (SM). Residues 274-275 (CL) and arginine 319 contribute to the carbamoyl phosphate site.

The protein belongs to the aspartate/ornithine carbamoyltransferase superfamily. OTCase family.

It is found in the cytoplasm. The enzyme catalyses carbamoyl phosphate + L-ornithine = L-citrulline + phosphate + H(+). It participates in amino-acid biosynthesis; L-arginine biosynthesis; L-arginine from L-ornithine and carbamoyl phosphate: step 1/3. In terms of biological role, reversibly catalyzes the transfer of the carbamoyl group from carbamoyl phosphate (CP) to the N(epsilon) atom of ornithine (ORN) to produce L-citrulline. The sequence is that of Ornithine carbamoyltransferase from Photobacterium profundum (strain SS9).